The following is a 228-amino-acid chain: Cytochrome c oxidase subunit 2 (228 aa).

Over 1 to 26 (MATWANLGLQNSSSPLMEQLNFFHDH) the chain is Mitochondrial intermembrane. The helical transmembrane segment at 27-48 (TVLILIMITVMITYVMGMLFFN) threads the bilayer. Over 49–62 (KFTNRYLLHGQTIE) the chain is Mitochondrial matrix. Residues 63–82 (IIWTILPAIILMFIAFPSLR) form a helical membrane-spanning segment. The Mitochondrial intermembrane portion of the chain corresponds to 83–228 (LLYLLDEINS…FIKWVSSQLN (146 aa)). Residues His-161, Cys-196, Glu-198, Cys-200, His-204, and Met-207 each coordinate Cu cation. Residue Glu-198 coordinates Mg(2+).

It belongs to the cytochrome c oxidase subunit 2 family. Component of the cytochrome c oxidase (complex IV, CIV), a multisubunit enzyme composed of a catalytic core of 3 subunits and several supernumerary subunits. The complex exists as a monomer or a dimer and forms supercomplexes (SCs) in the inner mitochondrial membrane with ubiquinol-cytochrome c oxidoreductase (cytochrome b-c1 complex, complex III, CIII). The cofactor is Cu cation.

It is found in the mitochondrion inner membrane. It carries out the reaction 4 Fe(II)-[cytochrome c] + O2 + 8 H(+)(in) = 4 Fe(III)-[cytochrome c] + 2 H2O + 4 H(+)(out). In terms of biological role, component of the cytochrome c oxidase, the last enzyme in the mitochondrial electron transport chain which drives oxidative phosphorylation. The respiratory chain contains 3 multisubunit complexes succinate dehydrogenase (complex II, CII), ubiquinol-cytochrome c oxidoreductase (cytochrome b-c1 complex, complex III, CIII) and cytochrome c oxidase (complex IV, CIV), that cooperate to transfer electrons derived from NADH and succinate to molecular oxygen, creating an electrochemical gradient over the inner membrane that drives transmembrane transport and the ATP synthase. Cytochrome c oxidase is the component of the respiratory chain that catalyzes the reduction of oxygen to water. Electrons originating from reduced cytochrome c in the intermembrane space (IMS) are transferred via the dinuclear copper A center (CU(A)) of subunit 2 and heme A of subunit 1 to the active site in subunit 1, a binuclear center (BNC) formed by heme A3 and copper B (CU(B)). The BNC reduces molecular oxygen to 2 water molecules using 4 electrons from cytochrome c in the IMS and 4 protons from the mitochondrial matrix. The chain is Cytochrome c oxidase subunit 2 (COII) from Culex quinquefasciatus (Southern house mosquito).